A 549-amino-acid chain; its full sequence is Glucoamylase, intracellular sporulation-specific (549 aa).

Substrate is bound at residue Trp198. Asp261 serves as the catalytic Proton acceptor. The Proton donor role is filled by Glu264.

Belongs to the glycosyl hydrolase 15 family.

The catalysed reaction is Hydrolysis of terminal (1-&gt;4)-linked alpha-D-glucose residues successively from non-reducing ends of the chains with release of beta-D-glucose.. This is Glucoamylase, intracellular sporulation-specific (SGA1) from Saccharomyces cerevisiae (strain ATCC 204508 / S288c) (Baker's yeast).